The chain runs to 143 residues: Large-conductance mechanosensitive channel (143 aa).

A run of 3 helical transmembrane segments spans residues 10–30, 40–60, and 86–106; these read FAVK…GAFG, VIMP…LFLV, and GSFI…FMMV.

Belongs to the MscL family. Homopentamer.

The protein resides in the cell inner membrane. In terms of biological role, channel that opens in response to stretch forces in the membrane lipid bilayer. May participate in the regulation of osmotic pressure changes within the cell. The chain is Large-conductance mechanosensitive channel from Paracidovorax citrulli (strain AAC00-1) (Acidovorax citrulli).